A 414-amino-acid chain; its full sequence is Histidine--tRNA ligase (414 aa).

The protein belongs to the class-II aminoacyl-tRNA synthetase family. As to quaternary structure, homodimer.

Its subcellular location is the cytoplasm. The catalysed reaction is tRNA(His) + L-histidine + ATP = L-histidyl-tRNA(His) + AMP + diphosphate + H(+). The chain is Histidine--tRNA ligase (hisS) from Mycoplasma pneumoniae (strain ATCC 29342 / M129 / Subtype 1) (Mycoplasmoides pneumoniae).